A 123-amino-acid polypeptide reads, in one-letter code: Small ribosomal subunit protein uS12 (123 aa).

The disordered stretch occupies residues 1-32 (MPTINQLVRHGRKRSVKKTNTPALKASPQKRG). Asp-89 carries the 3-methylthioaspartic acid modification.

This sequence belongs to the universal ribosomal protein uS12 family. As to quaternary structure, part of the 30S ribosomal subunit. Contacts proteins S8 and S17. May interact with IF1 in the 30S initiation complex.

Functionally, with S4 and S5 plays an important role in translational accuracy. Its function is as follows. Interacts with and stabilizes bases of the 16S rRNA that are involved in tRNA selection in the A site and with the mRNA backbone. Located at the interface of the 30S and 50S subunits, it traverses the body of the 30S subunit contacting proteins on the other side and probably holding the rRNA structure together. The combined cluster of proteins S8, S12 and S17 appears to hold together the shoulder and platform of the 30S subunit. The polypeptide is Small ribosomal subunit protein uS12 (Desulfatibacillum aliphaticivorans).